The following is a 171-amino-acid chain: UPF0763 protein HPP12_0677 (171 aa).

It belongs to the UPF0763 family.

The sequence is that of UPF0763 protein HPP12_0677 from Helicobacter pylori (strain P12).